Reading from the N-terminus, the 822-residue chain is SKI/DACH domain-containing protein 1 (822 aa).

Over residues 245–261 the composition is skewed to basic residues; it reads HHHHHHHHHHHHHHHRA. Positions 245–370 are disordered; the sequence is HHHHHHHHHH…SSSGSSQVSV (126 aa). Over residues 278-318 the composition is skewed to low complexity; that stretch reads PHLGSFPESCSSDSESSSYSDHAANDSDFGSSLSSSSNSVS. The segment covering 319 to 338 has biased composition (acidic residues); that stretch reads SEEEEEEGEEEEEEEEEEEG. Lys-602 is covalently cross-linked (Glycyl lysine isopeptide (Lys-Gly) (interchain with G-Cter in SUMO2)). Disordered stretches follow at residues 658-677 and 706-732; these read ETPS…TLGS and LQTP…THEG. A compositionally biased stretch (polar residues) spans 660 to 675; sequence PSLNPLAQSQGLSCTL.

It belongs to the DACH/dachshund family.

This Mus musculus (Mouse) protein is SKI/DACH domain-containing protein 1 (Skida1).